Here is a 1080-residue protein sequence, read N- to C-terminus: Isoleucine--tRNA ligase (1080 aa).

The 'HIGH' region signature appears at 48-58; sequence PYASGSIHLGT. The 'KMSKS' region signature appears at 628–632; the sequence is KMSKS. Residue K631 coordinates ATP.

This sequence belongs to the class-I aminoacyl-tRNA synthetase family. IleS type 2 subfamily. Monomer. The cofactor is Zn(2+).

Its subcellular location is the cytoplasm. It catalyses the reaction tRNA(Ile) + L-isoleucine + ATP = L-isoleucyl-tRNA(Ile) + AMP + diphosphate. Catalyzes the attachment of isoleucine to tRNA(Ile). As IleRS can inadvertently accommodate and process structurally similar amino acids such as valine, to avoid such errors it has two additional distinct tRNA(Ile)-dependent editing activities. One activity is designated as 'pretransfer' editing and involves the hydrolysis of activated Val-AMP. The other activity is designated 'posttransfer' editing and involves deacylation of mischarged Val-tRNA(Ile). This Methanopyrus kandleri (strain AV19 / DSM 6324 / JCM 9639 / NBRC 100938) protein is Isoleucine--tRNA ligase.